The following is an 886-amino-acid chain: Semaphorin-6B (886 aa).

The signal sequence occupies residues 1-26; that stretch reads MWTPRVPPPRPALSFFLLLLLGVTYG. Over 27–605 the chain is Extracellular; that stretch reads LFPEEPPPLS…VSVNLLVTSS (579 aa). The 494-residue stretch at 32–525 folds into the Sema domain; sequence PPPLSVAPRD…FPRCVVRVPV (494 aa). N-linked (GlcNAc...) asparagine glycosylation occurs at N75. Disulfide bonds link C117–C127 and C145–C154. N156 and N292 each carry an N-linked (GlcNAc...) asparagine glycan. 2 disulfides stabilise this stretch: C268–C379 and C293–C338. Residues N387, N442, and N463 are each glycosylated (N-linked (GlcNAc...) asparagine). 4 disulfide bridges follow: C487/C519, C528/C546, C534/C580, and C538/C554. A helical transmembrane segment spans residues 606–626; it reads VAAFVVGAVVSGFSVGWFVGL. The Cytoplasmic portion of the chain corresponds to 627-886; it reads RERRELARRK…TGERTAPPVP (260 aa). Disordered stretches follow at residues 655–677, 697–731, and 761–886; these read RLGERRGTGPGGRGGAGGGPGGP, HGGPHDLDTGLLPTPEQTPLPQKRLPTPHPHAHAL, and EQPQ…PPVP. Over residues 662–674 the composition is skewed to gly residues; the sequence is TGPGGRGGAGGGP. Omega-N-methylarginine is present on R667. Residues 707-718 show a composition bias toward low complexity; sequence LLPTPEQTPLPQ.

This sequence belongs to the semaphorin family. In terms of assembly, homodimer. Binds specifically the SH3 domain of the protooncogene C-SRC. In adulthood, it is expressed ubiquitously.

The protein localises to the cell membrane. Its function is as follows. Functions as a cell surface repellent for mossy fibers of developing neurons in the hippocampus where it plays a role in axon guidance. May function through the PLXNA4 receptor expressed by mossy cell axons. The protein is Semaphorin-6B (Sema6b) of Mus musculus (Mouse).